Here is a 388-residue protein sequence, read N- to C-terminus: Protein TsgA homolog (388 aa).

Transmembrane regions (helical) follow at residues 12 to 32 (CISF…GIFL), 51 to 71 (TFLN…TNII), 77 to 97 (LIFG…SHNL), 102 to 122 (ISMF…TYII), 137 to 157 (LTDS…ALII), 163 to 183 (WYWV…ITIN), 203 to 223 (FSIL…LSFI), 246 to 266 (SAFW…LKFF), 272 to 292 (IITL…FYDY), 294 to 314 (LLYI…TIII), 331 to 351 (YILT…GPIV), and 356 to 376 (IFSA…LVII).

It belongs to the major facilitator superfamily. TsgA family.

The protein resides in the cell membrane. The sequence is that of Protein TsgA homolog from Buchnera aphidicola subsp. Baizongia pistaciae (strain Bp).